Reading from the N-terminus, the 233-residue chain is MLKPISALNDNYIWVYGRENCPVIVVDITEIEPLLPFLRENKFAVEAVLLTHKHDDHVGGVAAFKRYFPDVPVYGPQECADKGATRIVNEGEIVTANYRIRVIPTGGHTAQHVSYVTDGCLFCGDTLFSAGCGRVFTGNYGQMYDSVQRLKTLPDDTLVCPAHEYTLANLAFAESVMKDKSAVKNQRVLVEKKRAENRPSVPTTLGLEKQINPFLIAENPAQFETWRKAKDQF.

Residues His-52, His-54, Asp-56, His-57, His-108, Asp-125, and His-163 each coordinate Zn(2+).

The protein belongs to the metallo-beta-lactamase superfamily. Glyoxalase II family. In terms of assembly, monomer. Requires Zn(2+) as cofactor.

The enzyme catalyses an S-(2-hydroxyacyl)glutathione + H2O = a 2-hydroxy carboxylate + glutathione + H(+). The protein operates within secondary metabolite metabolism; methylglyoxal degradation; (R)-lactate from methylglyoxal: step 2/2. Its function is as follows. Thiolesterase that catalyzes the hydrolysis of S-D-lactoyl-glutathione to form glutathione and D-lactic acid. The polypeptide is Hydroxyacylglutathione hydrolase (Actinobacillus succinogenes (strain ATCC 55618 / DSM 22257 / CCUG 43843 / 130Z)).